Reading from the N-terminus, the 451-residue chain is Inositol-pentakisphosphate 2-kinase (451 aa).

At Met1 the chain carries N-acetylmethionine. ATP contacts are provided by residues 19 to 22 and Arg40; that span reads GGAN. Arg45 and Arg130 together coordinate substrate. Residues 147 to 149 and 166 to 168 each bind ATP; these read NDH and EIK. The short motif at 166–170 is the EXKPK motif element; it reads EIKPK. 3 residues coordinate substrate: Lys170, Lys200, and Asn238. Arg241 provides a ligand contact to ATP. Zn(2+)-binding residues include His320, Cys330, Cys333, and His346. Asp368 contributes to the substrate binding site. Residue Asp407 coordinates ATP. Residues Lys411, Arg415, and Tyr419 each contribute to the substrate site.

This sequence belongs to the IPK1 type 2 family. It depends on Zn(2+) as a cofactor. As to expression, strongly expressed in leaves and cauline leaves. Weakly expressed in siliques and flowers. In flower, it is expressed in the major organs of developing flower buds. Strongly expressed in sepals, petals, in the male and female organs of immature and mature flower buds. Strongly expressed in the gynoecium and carpels which are fused to form the gynoecium. Also expressed in the transmitting tissue and ovules.

The enzyme catalyses 1D-myo-inositol 1,3,4,5,6-pentakisphosphate + ATP = 1D-myo-inositol hexakisphosphate + ADP + H(+). Its function is as follows. Phosphorylates Ins(1,3,4,5,6)P5 at position 2 to form Ins(1,2,3,4,5,6)P6 (InsP6 or phytate). Phytate is a regulator of intracellular signaling, a highly abundant animal antinutrient, and a phosphate store in plant seeds. Also phosphorylates Ins(1,3,4,6)P4 and Ins(1,4,5,6)P4 to produce Ins(1,2,3,4,6)P5 and Ins(1,2,4,5,6)P5. This Arabidopsis thaliana (Mouse-ear cress) protein is Inositol-pentakisphosphate 2-kinase (IPK1).